A 227-amino-acid chain; its full sequence is MAYPFQLGLQDASSPIMEELTNFHDHTLMIVFLISSLVLYIISSMLTTKMTHTSTMDAQEVETIWTVLPAVILILIALPSLRILYMMDEINNPVLTVKTMGHQWYWSYEYTDYESLCFDSYMVPTNDLKPGELRLLEVDNRVVLPMELPIRMLISSEDVLHSWAVPSLGLKTDAIPGRLNQATLTSNRPGLFYGQCSEICGSNHSFMPIVLEMVPLKHFENWSTSMI.

Over 1–14 (MAYPFQLGLQDASS) the chain is Mitochondrial intermembrane. Residues 15-45 (PIMEELTNFHDHTLMIVFLISSLVLYIISSM) traverse the membrane as a helical segment. The Mitochondrial matrix portion of the chain corresponds to 46–59 (LTTKMTHTSTMDAQ). Residues 60 to 87 (EVETIWTVLPAVILILIALPSLRILYMM) traverse the membrane as a helical segment. The Mitochondrial intermembrane portion of the chain corresponds to 88–227 (DEINNPVLTV…HFENWSTSMI (140 aa)). 6 residues coordinate Cu cation: H161, C196, E198, C200, H204, and M207. Position 198 (E198) interacts with Mg(2+).

It belongs to the cytochrome c oxidase subunit 2 family. As to quaternary structure, component of the cytochrome c oxidase (complex IV, CIV), a multisubunit enzyme composed of 14 subunits. The complex is composed of a catalytic core of 3 subunits MT-CO1, MT-CO2 and MT-CO3, encoded in the mitochondrial DNA, and 11 supernumerary subunits COX4I, COX5A, COX5B, COX6A, COX6B, COX6C, COX7A, COX7B, COX7C, COX8 and NDUFA4, which are encoded in the nuclear genome. The complex exists as a monomer or a dimer and forms supercomplexes (SCs) in the inner mitochondrial membrane with NADH-ubiquinone oxidoreductase (complex I, CI) and ubiquinol-cytochrome c oxidoreductase (cytochrome b-c1 complex, complex III, CIII), resulting in different assemblies (supercomplex SCI(1)III(2)IV(1) and megacomplex MCI(2)III(2)IV(2)). Found in a complex with TMEM177, COA6, COX18, COX20, SCO1 and SCO2. Interacts with TMEM177 in a COX20-dependent manner. Interacts with COX20. Interacts with COX16. Cu cation serves as cofactor.

It localises to the mitochondrion inner membrane. It catalyses the reaction 4 Fe(II)-[cytochrome c] + O2 + 8 H(+)(in) = 4 Fe(III)-[cytochrome c] + 2 H2O + 4 H(+)(out). Its function is as follows. Component of the cytochrome c oxidase, the last enzyme in the mitochondrial electron transport chain which drives oxidative phosphorylation. The respiratory chain contains 3 multisubunit complexes succinate dehydrogenase (complex II, CII), ubiquinol-cytochrome c oxidoreductase (cytochrome b-c1 complex, complex III, CIII) and cytochrome c oxidase (complex IV, CIV), that cooperate to transfer electrons derived from NADH and succinate to molecular oxygen, creating an electrochemical gradient over the inner membrane that drives transmembrane transport and the ATP synthase. Cytochrome c oxidase is the component of the respiratory chain that catalyzes the reduction of oxygen to water. Electrons originating from reduced cytochrome c in the intermembrane space (IMS) are transferred via the dinuclear copper A center (CU(A)) of subunit 2 and heme A of subunit 1 to the active site in subunit 1, a binuclear center (BNC) formed by heme A3 and copper B (CU(B)). The BNC reduces molecular oxygen to 2 water molecules using 4 electrons from cytochrome c in the IMS and 4 protons from the mitochondrial matrix. The sequence is that of Cytochrome c oxidase subunit 2 (MT-CO2) from Lophuromys flavopunctatus (Yellow-spotted brush-furred rat).